The primary structure comprises 216 residues: Protein-L-isoaspartate O-methyltransferase (216 aa).

Residue S65 is part of the active site.

This sequence belongs to the methyltransferase superfamily. L-isoaspartyl/D-aspartyl protein methyltransferase family.

It is found in the cytoplasm. The catalysed reaction is [protein]-L-isoaspartate + S-adenosyl-L-methionine = [protein]-L-isoaspartate alpha-methyl ester + S-adenosyl-L-homocysteine. Catalyzes the methyl esterification of L-isoaspartyl residues in peptides and proteins that result from spontaneous decomposition of normal L-aspartyl and L-asparaginyl residues. It plays a role in the repair and/or degradation of damaged proteins. The sequence is that of Protein-L-isoaspartate O-methyltransferase from Chlorobium phaeobacteroides (strain DSM 266 / SMG 266 / 2430).